The chain runs to 364 residues: MAQQTPLYEQHTLCGARMVDFHGWMMPLHYGSQIDEHHAVRTDAGMFDVSHMTIVDLRGSRTREFLRYLLANDVAKLTKSGKALYSGMLNASGGVIDDLIVYYFTEDFFRLVVNSATREKDLSWITQHAEPFGIEITVRDDLSMIAVQGPNAQAKAATLFNDAQRQAVEGMKPFFGVQVGDLFIATTGYTGEAGYEIALPNEKAADFWRALVEAGVKPCGLGARDTLRLEAGMNLYGQEMDETISPLAANMGWTIAWEPTDRDFIGREALEVQREHGTEKLVGLVMTEKGVLRNELPVRFTDAQGNQHEGIITSGTFSPTLGYSIALARVPEGIGETAIVQIRNREMPVKVTKPVFVRNGKAVA.

Belongs to the GcvT family. In terms of assembly, the glycine cleavage system is composed of four proteins: P, T, L and H.

It catalyses the reaction N(6)-[(R)-S(8)-aminomethyldihydrolipoyl]-L-lysyl-[protein] + (6S)-5,6,7,8-tetrahydrofolate = N(6)-[(R)-dihydrolipoyl]-L-lysyl-[protein] + (6R)-5,10-methylene-5,6,7,8-tetrahydrofolate + NH4(+). In terms of biological role, the glycine cleavage system catalyzes the degradation of glycine. This chain is Aminomethyltransferase, found in Shigella flexneri.